An 89-amino-acid chain; its full sequence is Small ribosomal subunit protein uS15 (89 aa).

Belongs to the universal ribosomal protein uS15 family. In terms of assembly, part of the 30S ribosomal subunit. Forms a bridge to the 50S subunit in the 70S ribosome, contacting the 23S rRNA.

Its function is as follows. One of the primary rRNA binding proteins, it binds directly to 16S rRNA where it helps nucleate assembly of the platform of the 30S subunit by binding and bridging several RNA helices of the 16S rRNA. Forms an intersubunit bridge (bridge B4) with the 23S rRNA of the 50S subunit in the ribosome. This chain is Small ribosomal subunit protein uS15, found in Latilactobacillus sakei subsp. sakei (strain 23K) (Lactobacillus sakei subsp. sakei).